The chain runs to 833 residues: Serine/threonine-protein phosphatase 4 regulatory subunit 3A (833 aa).

Positions 1–100 (MTDTRRRVKV…DEIWEKICQV (100 aa)) constitute a WH1 domain. A phosphoserine mark is found at Ser117 and Ser127. Residue Lys655 is modified to N6-acetyllysine. Residues 683–694 (FNTDEDDMEDGE) are compositionally biased toward acidic residues. Disordered stretches follow at residues 683–712 (FNTD…IMDP) and 733–833 (KTNL…KFDS). A phosphoserine mark is found at Ser698, Ser741, Ser768, Ser771, Ser774, Ser777, and Ser780. A compositionally biased stretch (polar residues) spans 734–751 (TNLSGRQSPSFKLSLSSG). Positions 752-768 (TKTNLTSQSSTTNLPGS) are enriched in low complexity. The segment covering 785–794 (PKNTSQTAAI) has biased composition (polar residues). Residues 806-820 (YPDDDEDDDEDEDKE) are compositionally biased toward acidic residues.

The protein belongs to the SMEK family. Serine/threonine-protein phosphatase 4 (PP4) occurs in different assemblies of the catalytic and one or more regulatory subunits. Component of the PP4 complex PPP4C-PPP4R2-PPP4R3A. Interacts with PPP4C; the interaction requires PPP4R2.

The protein resides in the cytoplasm. Its subcellular location is the cytoskeleton. The protein localises to the microtubule organizing center. It is found in the centrosome. It localises to the nucleus. Its function is as follows. Regulatory subunit of serine/threonine-protein phosphatase 4. May regulate the activity of PPP4C at centrosomal microtubule organizing centers. The PPP4C-PPP4R2-PPP4R3A PP4 complex specifically dephosphorylates H2AX phosphorylated on 'Ser-140' (gamma-H2AX) generated during DNA replication and required for DNA DSB repair. The chain is Serine/threonine-protein phosphatase 4 regulatory subunit 3A from Homo sapiens (Human).